We begin with the raw amino-acid sequence, 232 residues long: 2-C-methyl-D-erythritol 4-phosphate cytidylyltransferase (232 aa).

The protein belongs to the IspD/TarI cytidylyltransferase family. IspD subfamily.

The catalysed reaction is 2-C-methyl-D-erythritol 4-phosphate + CTP + H(+) = 4-CDP-2-C-methyl-D-erythritol + diphosphate. It participates in isoprenoid biosynthesis; isopentenyl diphosphate biosynthesis via DXP pathway; isopentenyl diphosphate from 1-deoxy-D-xylulose 5-phosphate: step 2/6. Catalyzes the formation of 4-diphosphocytidyl-2-C-methyl-D-erythritol from CTP and 2-C-methyl-D-erythritol 4-phosphate (MEP). The polypeptide is 2-C-methyl-D-erythritol 4-phosphate cytidylyltransferase (Vibrio cholerae serotype O1 (strain ATCC 39315 / El Tor Inaba N16961)).